We begin with the raw amino-acid sequence, 151 residues long: Transcriptional regulator MraZ (151 aa).

SpoVT-AbrB domains lie at 5–52 (ANAI…PLDE) and 81–124 (AVDL…DEDA).

This sequence belongs to the MraZ family. As to quaternary structure, forms oligomers.

It is found in the cytoplasm. The protein resides in the nucleoid. This is Transcriptional regulator MraZ from Pseudomonas fluorescens (strain Pf0-1).